The following is a 64-amino-acid chain: Large ribosomal subunit protein bL35 (64 aa).

Belongs to the bacterial ribosomal protein bL35 family.

This Mycoplasmopsis pulmonis (strain UAB CTIP) (Mycoplasma pulmonis) protein is Large ribosomal subunit protein bL35.